Reading from the N-terminus, the 353-residue chain is 4-hydroxy-2-oxovalerate aldolase 2 (353 aa).

Positions 14–266 (VRMTDTSLRD…KTGIDFFDIA (253 aa)) constitute a Pyruvate carboxyltransferase domain. 22–23 (RD) contacts substrate. Asp23 contacts Mn(2+). Catalysis depends on His26, which acts as the Proton acceptor. Residues Ser176 and His205 each contribute to the substrate site. Mn(2+) is bound by residues His205 and His207. Tyr296 is a substrate binding site.

This sequence belongs to the 4-hydroxy-2-oxovalerate aldolase family.

It catalyses the reaction (S)-4-hydroxy-2-oxopentanoate = acetaldehyde + pyruvate. In Mycobacterium sp. (strain JLS), this protein is 4-hydroxy-2-oxovalerate aldolase 2.